The following is a 225-amino-acid chain: MRIDIITVLPEMIEGFFNCSIMKRAQDKGLAEIHIHNLRDYTEDKYRRVDDYPFGGFAGMVMKIEPIERCINTLKAERDYDEVIFTTPDGEQFDQKMANSLSLSGNLIILCGHFKGIDYRIREHLITKEISIGDYVLTGGELAAAVMADAIVRIIPGVISDEQSALSDSFQDNLLAAPVYTRPAEYKGWKVPEILLSGHEAKIKEWELQQSLERTRRLRPDLLED.

Residues G112 and 132 to 137 (IGDYVL) each bind S-adenosyl-L-methionine.

This sequence belongs to the RNA methyltransferase TrmD family. As to quaternary structure, homodimer.

It localises to the cytoplasm. The catalysed reaction is guanosine(37) in tRNA + S-adenosyl-L-methionine = N(1)-methylguanosine(37) in tRNA + S-adenosyl-L-homocysteine + H(+). Its function is as follows. Specifically methylates guanosine-37 in various tRNAs. The sequence is that of tRNA (guanine-N(1)-)-methyltransferase from Bacteroides fragilis (strain ATCC 25285 / DSM 2151 / CCUG 4856 / JCM 11019 / LMG 10263 / NCTC 9343 / Onslow / VPI 2553 / EN-2).